Consider the following 515-residue polypeptide: 2-isopropylmalate synthase (515 aa).

The 263-residue stretch at 4 to 266 (IKFFDTTLRD…ETRLNLQEIK (263 aa)) folds into the Pyruvate carboxyltransferase domain. 4 residues coordinate Mn(2+): aspartate 13, histidine 201, histidine 203, and asparagine 237. The interval 391-515 (QLSSIQVQYG…RGENEKVATP (125 aa)) is regulatory domain.

It belongs to the alpha-IPM synthase/homocitrate synthase family. LeuA type 1 subfamily. Homodimer. It depends on Mn(2+) as a cofactor.

It localises to the cytoplasm. It carries out the reaction 3-methyl-2-oxobutanoate + acetyl-CoA + H2O = (2S)-2-isopropylmalate + CoA + H(+). Its pathway is amino-acid biosynthesis; L-leucine biosynthesis; L-leucine from 3-methyl-2-oxobutanoate: step 1/4. Catalyzes the condensation of the acetyl group of acetyl-CoA with 3-methyl-2-oxobutanoate (2-ketoisovalerate) to form 3-carboxy-3-hydroxy-4-methylpentanoate (2-isopropylmalate). The chain is 2-isopropylmalate synthase from Geobacillus kaustophilus (strain HTA426).